Reading from the N-terminus, the 119-residue chain is C-X-C motif chemokine 17 (119 aa).

The first 21 residues, 1 to 21 (MKVLISSLLLLLPLMLMSMVS), serve as a signal peptide directing secretion. Disulfide bonds link Cys75–Cys103 and Cys77–Cys110. Residues 81–100 (KGNVKKTRHQRHHRKPNKHS) form a disordered region. A compositionally biased stretch (basic residues) spans 82-100 (GNVKKTRHQRHHRKPNKHS).

It belongs to the intercrine alpha (chemokine CxC) family. In terms of processing, likely to undergo an endoproteolytic process to form a four-cysteine-containing mature peptide with a canonical CXC chemokine scaffold after secretion. In terms of tissue distribution, detected in trachea, stomach, lung and skeletal muscle. Detected in intestine and in normal and asthmatic lung (at protein level). Breast tumors showed 3- to 24-fold up-regulation.

The protein resides in the secreted. In terms of biological role, chemokine that acts as a chemoattractant for monocytes, macrophages and dendritic cells. Plays a role in angiogenesis and possibly in the development of tumors. Acts as an anti-inflammatory in the stomach. May play a role in the innate defense against infections. Activates the C-X-C chemokine receptor GPR35 to induce a rapid and transient rise in the level of intracellular calcium ions. Its function is as follows. Seems to exhibit much higher chemoattractant potency on monocytes and macrophages than 6-Cys CXCL17. The sequence is that of C-X-C motif chemokine 17 (CXCL17) from Homo sapiens (Human).